The primary structure comprises 345 residues: MPELTRFQKFFLTPEKFNKFTRVVGFCGVFALIALSLGIYSYVGQGSIVPKVAALFLIALGGFTLLLSFVINFVALYKRSQLIHLVNRQDRTDLWLQKMANNKQFEQFELFEKGPISADILPTFYPATIYNFELVPKQFKVQYKNGQTLNFAKLSAIKRSTSKNEKVACLVAIIDAVSDQHWFLTKSDFPLINTGFYESLTESNRQNNVLLYTEKDASFNFNQLDKEMIKQVLFNPVNVYANFNVYNNTTHTYLMMSVPITFMDTSLRMEEAVGDLELNITRQAGYDAATLDSFHKVVELLKTKLIGDFNNAETTSATETTVVAEVTEPTTNSKRKPVKAKKAKK.

The next 2 helical transmembrane spans lie at 23-43 and 56-76; these read VVGF…YSYV and FLIA…FVAL. A disordered region spans residues 326 to 345; it reads VTEPTTNSKRKPVKAKKAKK. Over residues 333 to 345 the composition is skewed to basic residues; sequence SKRKPVKAKKAKK.

It localises to the cell membrane. This is an uncharacterized protein from Mycoplasma pneumoniae (strain ATCC 29342 / M129 / Subtype 1) (Mycoplasmoides pneumoniae).